A 492-amino-acid polypeptide reads, in one-letter code: Cholesteryl ester transfer protein (492 aa).

The first 17 residues, 1-17 (MLAVTLLSLALLGSTCA), serve as a signal peptide directing secretion. Cys160 and Cys201 form a disulfide bridge. An N-linked (GlcNAc...) asparagine glycan is attached at Asn257.

Belongs to the BPI/LBP/Plunc superfamily. BPI/LBP family.

It localises to the secreted. The catalysed reaction is cholesteryl (9Z-octadecenoate)(in) = cholesteryl (9Z-octadecenoate)(out). The enzyme catalyses 1,2,3-tri-(9Z-octadecenoyl)-glycerol(in) = 1,2,3-tri-(9Z-octadecenoyl)-glycerol(out). It carries out the reaction cholesteryl (9Z,12Z)-octadecadienoate(in) = cholesteryl (9Z,12Z)-octadecadienoate(out). Its function is as follows. Involved in the transfer of neutral lipids, including cholesteryl ester and triglyceride, among lipoprotein particles. Allows the net movement of cholesteryl ester from high density lipoproteins/HDL to triglyceride-rich very low density lipoproteins/VLDL, and the equimolar transport of triglyceride from VLDL to HDL. Regulates the reverse cholesterol transport, by which excess cholesterol is removed from peripheral tissues and returned to the liver for elimination. The chain is Cholesteryl ester transfer protein from Cricetulus griseus (Chinese hamster).